The chain runs to 576 residues: Putative pentatricopeptide repeat-containing protein At5g47460 (576 aa).

14 PPR repeats span residues 20 to 53 (SSNS…GEKP), 54 to 88 (DASP…GFVS), 89 to 119 (NTRL…MPDP), 120 to 154 (DVIS…DVFP), 155 to 189 (NEFS…GLEK), 191 to 225 (NVVV…DTVS), 226 to 252 (WNAI…MPNP), 253 to 287 (DTVT…NSSS), 288 to 318 (WNTI…GVRF), 319 to 353 (DEYS…GLDS), 354 to 384 (RVVV…MPRK), 385 to 419 (NLIV…RFLK), 421 to 452 (DRFT…MINE), and 458 to 488 (SVEH…FGFG). The interval 493–570 (AWRALLGACS…EVGSSWIDSR (78 aa)) is type E motif.

It belongs to the PPR family. PCMP-E subfamily.

This chain is Putative pentatricopeptide repeat-containing protein At5g47460 (PCMP-E103), found in Arabidopsis thaliana (Mouse-ear cress).